The primary structure comprises 251 residues: Triosephosphate isomerase (251 aa).

Position 12 to 14 (12 to 14) interacts with substrate; sequence NWK. The active-site Electrophile is His99. Glu169 acts as the Proton acceptor in catalysis. Substrate is bound by residues Gly175, Ser214, and 235–236; that span reads GG.

The protein belongs to the triosephosphate isomerase family. As to quaternary structure, homodimer.

It localises to the cytoplasm. The catalysed reaction is D-glyceraldehyde 3-phosphate = dihydroxyacetone phosphate. It functions in the pathway carbohydrate biosynthesis; gluconeogenesis. The protein operates within carbohydrate degradation; glycolysis; D-glyceraldehyde 3-phosphate from glycerone phosphate: step 1/1. In terms of biological role, involved in the gluconeogenesis. Catalyzes stereospecifically the conversion of dihydroxyacetone phosphate (DHAP) to D-glyceraldehyde-3-phosphate (G3P). This chain is Triosephosphate isomerase, found in Bradyrhizobium sp. (strain ORS 278).